The primary structure comprises 319 residues: Carbonic anhydrase, chloroplastic (319 aa).

A chloroplast-targeting transit peptide spans 1–98 (MSTINGCLTS…AASKVAQITS (98 aa)).

The protein belongs to the beta-class carbonic anhydrase family. As to quaternary structure, homohexamer.

It localises to the plastid. The protein localises to the chloroplast stroma. It carries out the reaction hydrogencarbonate + H(+) = CO2 + H2O. Reversible hydration of carbon dioxide. The protein is Carbonic anhydrase, chloroplastic of Spinacia oleracea (Spinach).